A 1198-amino-acid chain; its full sequence is Structural polyprotein (1198 aa).

Residues threonine 2–asparagine 15 are interaction with host EXOC1. Residues threonine 2–glutamate 109 lie on the Cytoplasmic side of the membrane. Residues leucine 37–valine 72 are hydrophobic; homodimerization of capsid protein C. A propeptide spans glycine 106–alanine 127 (ER anchor for the capsid protein C, removed in mature form by serine protease NS3). The helical transmembrane segment at glycine 110 to leucine 130 threads the bilayer. Over serine 131–asparagine 253 the chain is Extracellular. Asparagine 142 carries an N-linked (GlcNAc...) asparagine; by host glycan. The chain crosses the membrane as a helical span at residues tryptophan 254–serine 274. Residues asparagine 275–arginine 279 are Cytoplasmic-facing. A helical membrane pass occupies residues valine 280 to serine 294. Over phenylalanine 295–leucine 746 the chain is Extracellular. Intrachain disulfides connect cysteine 297-cysteine 324, cysteine 354-cysteine 410, cysteine 354-cysteine 415, cysteine 368-cysteine 399, cysteine 386-cysteine 410, and cysteine 386-cysteine 415. Residues aspartate 392 to glycine 405 are fusion peptide. The N-linked (GlcNAc...) asparagine; by host glycan is linked to asparagine 448. 2 cysteine pairs are disulfide-bonded: cysteine 484-cysteine 581 and cysteine 598-cysteine 629. Residues phenylalanine 747–valine 767 form a helical membrane-spanning segment. The Cytoplasmic portion of the chain corresponds to asparagine 768 to serine 773. Residues isoleucine 774–alanine 794 form a helical membrane-spanning segment. The Extracellular segment spans residues aspartate 795 to histidine 1198. 6 disulfides stabilise this stretch: cysteine 798-cysteine 809, cysteine 849-cysteine 937, cysteine 973-cysteine 1017, cysteine 1074-cysteine 1123, cysteine 1085-cysteine 1106, and cysteine 1107-cysteine 1110. Asparagine 924 and asparagine 1001 each carry an N-linked (GlcNAc...) asparagine; by host glycan. Residues valine 1152–glutamine 1177 are disordered.

As to quaternary structure, homodimer. Interacts (via N-terminus) with host EXOC1 (via C-terminus); this interaction results in EXOC1 degradation through the proteasome degradation pathway. Interacts with host CAPRIN1; this interaction is involved in the suppression of the integrated stress response. In terms of assembly, forms heterodimers with envelope protein E in the endoplasmic reticulum and Golgi. Homodimer; in the endoplasmic reticulum and Golgi. Interacts with protein prM. Interacts with non-structural protein 1. Post-translationally, genome polyprotein: Specific enzymatic cleavages in vivo yield mature proteins. Cleavages in the lumen of endoplasmic reticulum are performed by host signal peptidase, whereas cleavages in the cytoplasmic side are performed by serine protease NS3. Signal cleavage at the 2K-4B site requires a prior NS3 protease-mediated cleavage at the 4A-2K site. In terms of processing, cleaved in post-Golgi vesicles by a host furin, releasing the mature small envelope protein M, and peptide pr. This cleavage is incomplete as up to 30% of viral particles still carry uncleaved prM. N-glycosylated.

The protein localises to the secreted. The protein resides in the virion membrane. It localises to the host endoplasmic reticulum membrane. In terms of biological role, plays a role in virus budding by binding to the cell membrane and gathering the viral RNA into a nucleocapsid that forms the core of a mature virus particle. During virus entry, may induce genome penetration into the host cytoplasm after hemifusion induced by the surface proteins. Can migrate to the cell nucleus where it modulates host functions. Overcomes the anti-viral effects of host EXOC1 by sequestering and degrading the latter through the proteasome degradation pathway. Inhibits the integrated stress response (ISR) in the infected cell by binding to host CAPRIN1. Functionally, inhibits RNA silencing by interfering with host Dicer. Prevents premature fusion activity of envelope proteins in trans-Golgi by binding to envelope protein E at pH6.0. After virion release in extracellular space, gets dissociated from E dimers. Its function is as follows. Acts as a chaperone for envelope protein E during intracellular virion assembly by masking and inactivating envelope protein E fusion peptide. prM is the only viral peptide matured by host furin in the trans-Golgi network probably to avoid catastrophic activation of the viral fusion activity in acidic Golgi compartment prior to virion release. prM-E cleavage is inefficient, and many virions are only partially matured. These uncleaved prM would play a role in immune evasion. In terms of biological role, may play a role in virus budding. Exerts cytotoxic effects by activating a mitochondrial apoptotic pathway through M ectodomain. May display a viroporin activity. Functionally, binds to host cell surface receptor and mediates fusion between viral and cellular membranes. Envelope protein is synthesized in the endoplasmic reticulum in the form of heterodimer with protein prM. They play a role in virion budding in the ER, and the newly formed immature particle is covered with 60 spikes composed of heterodimer between precursor prM and envelope protein E. The virion is transported to the Golgi apparatus where the low pH causes dissociation of PrM-E heterodimers and formation of E homodimers. prM-E cleavage is inefficient, and many virions are only partially matured. These uncleaved prM would play a role in immune evasion. May play a role in neuroinvasiveness. The polypeptide is Structural polyprotein (Japanese encephalitis virus (strain Jaoars982) (JEV)).